The primary structure comprises 559 residues: Transcription factor tstO (559 aa).

The zn(2)-C6 fungal-type DNA-binding region spans 23 to 50; it reads CDACQSAKVRCGREKPTCRRCQNQGKTC. 2 disordered regions span residues 166 to 316 and 453 to 477; these read GPST…TGFS and ASPP…ISTA. Residues 222-232 are compositionally biased toward low complexity; that stretch reads SSESLSLEPSS. A compositionally biased stretch (polar residues) spans 255–267; the sequence is TRGSQKISPNPHS. Residues 268–279 show a composition bias toward basic and acidic residues; sequence IDSRTSSRDKSF. Composition is skewed to low complexity over residues 286–316 and 462–477; these read STLG…TGFS and NNNT…ISTA.

The protein resides in the nucleus. Functionally, transcription factore; part of the gene cluster that mediates the biosynthesis of the antihypercholesterolemic agents phomoidrides which are dimeric anhydrides. Probably regulates the expression of the genes from the cluster. The polypeptide is Transcription factor tstO (Talaromyces stipitatus (strain ATCC 10500 / CBS 375.48 / QM 6759 / NRRL 1006) (Penicillium stipitatum)).